The following is a 122-amino-acid chain: uncharacterized protein (122 aa).

It to B.subtilis YpdA.

This is an uncharacterized protein from Bacillus licheniformis.